A 422-amino-acid chain; its full sequence is Mitochondrial inner membrane magnesium transporter mrs2 (422 aa).

The transit peptide at methionine 1–tyrosine 49 directs the protein to the mitochondrion. Residues leucine 331 to valine 351 traverse the membrane as a helical segment. The YGMN motif lies at tyrosine 355–asparagine 358. The helical transmembrane segment at phenylalanine 370–leucine 390 threads the bilayer.

This sequence belongs to the CorA metal ion transporter (MIT) (TC 1.A.35) family. As to quaternary structure, homopentamer. Forms homooligomers. Interacts with MFM1.

It is found in the mitochondrion inner membrane. High-conductance magnesium-selective channel that mediates the influx of magnesium into the mitochondrial matrix. Essential for the splicing of mRNA group II introns in mitochondria by affecting mitochondrial magnesium concentrations, which are critical for group II intron splicing. It also suppresses a variety of mitochondrial intron mutations and its absence may disturb the assembly of mitochondrial membrane complexes. This Schizosaccharomyces pombe (strain 972 / ATCC 24843) (Fission yeast) protein is Mitochondrial inner membrane magnesium transporter mrs2 (mrs2).